We begin with the raw amino-acid sequence, 248 residues long: Sugar fermentation stimulation protein homolog (248 aa).

Belongs to the SfsA family.

In Methylorubrum extorquens (strain PA1) (Methylobacterium extorquens), this protein is Sugar fermentation stimulation protein homolog.